The sequence spans 1115 residues: G-protein coupled receptor GRL101 (1115 aa).

An N-terminal signal peptide occupies residues 1-24; the sequence is MATMSGTTIVCLIYLTTMLGNSQG. Topologically, residues 25–767 are extracellular; it reads VNLKIESPSP…SCEDLMSNHV (743 aa). 12 consecutive LDL-receptor class A domains span residues 36–79, 77–115, 116–155, 156–196, 195–232, 231–269, 272–318, 320–363, 365–403, 404–442, 444–485, and 486–525; these read TLCS…TCGC, CGCLQSEFQCNHTTCIDKILRCDRNDDCSNGLDERECDI, YICPLGTHVKWHNHFCVPRDKQCDFLDDCGDNSDEKICER, RECV…ACDS, DSDKYFQCAEGSLIKKEFVCDGWVDCKLTFADELNCKL, KLCDEDDFRCSDTRCIQKSNVCDGYCDCKTCDDEEVCAN, YGCP…YCSN, SECK…SCLA, PKCSQDEFQCHHGKCIPISKRCDSVHDCVDWSDEMNCEN, HQCAANMKSCLSGHCIEEHKWCNFHRECPDGSDEKDCDP, PVCE…NCSQ, and HICLEGQFRCRKSFCINQTKVCDGTVDCLQGMWDENNCRY. Disulfide bonds link Cys-38/Cys-53, Cys-46/Cys-66, Cys-60/Cys-77, Cys-79/Cys-91, Cys-86/Cys-104, Cys-98/Cys-113, Cys-118/Cys-131, Cys-138/Cys-153, Cys-158/Cys-170, Cys-165/Cys-183, Cys-177/Cys-194, Cys-202/Cys-220, Cys-214/Cys-230, Cys-233/Cys-245, Cys-240/Cys-258, and Cys-252/Cys-267. The N-linked (GlcNAc...) asparagine glycan is linked to Asn-87. Asn-166 carries an N-linked (GlcNAc...) asparagine glycan. Asn-269 carries an N-linked (GlcNAc...) asparagine glycan. Intrachain disulfides connect Cys-274-Cys-291, Cys-282-Cys-304, and Cys-298-Cys-316. Asn-318 carries an N-linked (GlcNAc...) asparagine glycan. Cystine bridges form between Cys-322/Cys-339, Cys-334/Cys-352, Cys-346/Cys-361, Cys-367/Cys-379, Cys-374/Cys-392, Cys-386/Cys-401, Cys-406/Cys-418, Cys-413/Cys-431, Cys-425/Cys-440, Cys-446/Cys-458, Cys-453/Cys-474, Cys-465/Cys-483, Cys-488/Cys-500, Cys-495/Cys-513, and Cys-507/Cys-523. Asn-482 is a glycosylation site (N-linked (GlcNAc...) asparagine). The N-linked (GlcNAc...) asparagine glycan is linked to Asn-502. An LRRNT domain is found at 518 to 562; it reads WDENNCRYWCPHGQAICQCEGVTMDCTGQKLKEMPVQQMEEDLSK. Residue Asn-571 is glycosylated (N-linked (GlcNAc...) asparagine). LRR repeat units lie at residues 584 to 605, 608 to 629, 632 to 653, 656 to 677, 680 to 701, and 704 to 725; these read KVTYLDLSRNHLTEIPIYSFQN, KLTHLNLADNNITSLKNGSLLG, NLKQLHINGNKIETIEEDTFSS, HLTVLDLSNQRLTHVYKNMFKG, QITVLNISRNQINSIDNGAFNN, and NVRLIDLSGNVIKDIGQKVFMG. Residues Asn-618 and Asn-624 are each glycosylated (N-linked (GlcNAc...) asparagine). Asn-685 carries N-linked (GlcNAc...) asparagine glycosylation. Residues 768–788 form a helical membrane-spanning segment; the sequence is LRVSIWVLGVIALVGNFVVIF. Over 789–801 the chain is Cytoplasmic; it reads WRVRDFRGGKVHS. Residues 802–822 traverse the membrane as a helical segment; the sequence is FLITNLAIGDFLMGVYLLIIA. Over 823-857 the chain is Extracellular; it reads TADTYYRGVYISHDENWKQSGLCQFAGFVSTFSSE. A helical membrane pass occupies residues 858-878; that stretch reads LSVLTLSTITLDRLICILFPL. The Cytoplasmic segment spans residues 879-887; that stretch reads RRTRLGLRQ. The helical transmembrane segment at 888–908 threads the bilayer; that stretch reads AIIVMSCIWVLVFLLAVLPLL. The Extracellular segment spans residues 909 to 941; sequence GFSYFENFYGRSGVCLALHVTPDRRPGWEYSVG. A helical membrane pass occupies residues 942 to 962; it reads VFILLNLLSFVLIASSYLWMF. Residues 963–988 lie on the Cytoplasmic side of the membrane; it reads SVAKKTRSAVRTAESKNDNAMARRMT. Residues 989 to 1009 traverse the membrane as a helical segment; that stretch reads LIVMTDFCCWVPIIVLGFVSL. Topologically, residues 1010 to 1017 are extracellular; sequence AGARADDQ. Residues 1018–1038 form a helical membrane-spanning segment; sequence VYAWIAVFVLPLNSATNPVIY. Topologically, residues 1039–1115 are cytoplasmic; it reads TLSTAPFLGN…YYNTELHSDS (77 aa).

Belongs to the G-protein coupled receptor 1 family. In terms of tissue distribution, predominantly expressed in a small number of neurons within the central nervous system and to a lesser extent in the heart.

It localises to the cell membrane. Might directly transduce signals carried by large extracellular lipoprotein complexes into neuronal events. This is G-protein coupled receptor GRL101 from Lymnaea stagnalis (Great pond snail).